We begin with the raw amino-acid sequence, 403 residues long: Nucleolar protein 13 (403 aa).

Basic and acidic residues-rich tracts occupy residues 1–35 (MSET…RKAE) and 75–97 (KSIE…KDAQ). Disordered regions lie at residues 1–43 (MSET…IDLK) and 72–116 (IDPK…EVVK). S2 bears the N-acetylserine mark. S2 carries the post-translational modification Phosphoserine. Positions 99–108 (EESTINTPTG) are enriched in polar residues. T105 bears the Phosphothreonine mark. 2 consecutive RRM domains span residues 125-219 (YGVW…DSEN) and 239-317 (RILF…YGED). Basic and acidic residues predominate over residues 313-329 (EYGEDRSKRQVRKKVEN). Residues 313–403 (EYGEDRSKRQ…PSQGKKVKFD (91 aa)) are disordered. Positions 330-344 (VSRNNSSSFDISNNK) are enriched in polar residues. Phosphoserine is present on S335. The span at 345-361 (GYDRAGQDNGSKPEYKR) shows a compositional bias: basic and acidic residues. Residues 371 to 381 (DSNNRTKSSVA) are compositionally biased toward polar residues.

It localises to the nucleus. It is found in the nucleolus. The polypeptide is Nucleolar protein 13 (NOP13) (Saccharomyces cerevisiae (strain ATCC 204508 / S288c) (Baker's yeast)).